The following is a 205-amino-acid chain: Small heat shock protein hspG12 (205 aa).

The 171-residue stretch at 35 to 205 (KTIIDILPPM…YSNTIKININ (171 aa)) folds into the sHSP domain. Residues 99-147 (PSLLDTKEDEASIEEFDEDDIKPKSTETTSTLSNSKENKKDENKSKSTE) are disordered. The span at 109 to 118 (ASIEEFDEDD) shows a compositional bias: acidic residues. The segment covering 134–147 (KENKKDENKSKSTE) has biased composition (basic and acidic residues).

It belongs to the small heat shock protein (HSP20) family.

The sequence is that of Small heat shock protein hspG12 (hspG12) from Dictyostelium discoideum (Social amoeba).